The sequence spans 187 residues: uncharacterized protein (187 aa).

This is an uncharacterized protein from Manihot esculenta (Cassava).